The primary structure comprises 190 residues: dCTP deaminase, dUMP-forming (190 aa).

Residues 101–106 (KSSLGR), D119, 127–129 (TLE), Q148, Y162, K170, and Q174 contribute to the dCTP site. The Proton donor/acceptor role is filled by E129. The disordered stretch occupies residues 160–190 (HPYGSSRAGSKYQGQRGPTPSRSYQNFIRST). The span at 171-190 (YQGQRGPTPSRSYQNFIRST) shows a compositional bias: polar residues.

This sequence belongs to the dCTP deaminase family. As to quaternary structure, homotrimer.

The enzyme catalyses dCTP + 2 H2O = dUMP + NH4(+) + diphosphate. Its pathway is pyrimidine metabolism; dUMP biosynthesis; dUMP from dCTP: step 1/1. Its function is as follows. Bifunctional enzyme that catalyzes both the deamination of dCTP to dUTP and the hydrolysis of dUTP to dUMP without releasing the toxic dUTP intermediate. In Mycobacterium tuberculosis (strain ATCC 25177 / H37Ra), this protein is dCTP deaminase, dUMP-forming.